Here is a 268-residue protein sequence, read N- to C-terminus: Aliphatic sulfonates import ATP-binding protein SsuB (268 aa).

One can recognise an ABC transporter domain in the interval 15–236 (LAVRNLQKTF…VRGSHRLAAL (222 aa)). ATP is bound at residue 47-54 (GRSGCGKS).

Belongs to the ABC transporter superfamily. Aliphatic sulfonates importer (TC 3.A.1.17.2) family. The complex is composed of two ATP-binding proteins (SsuB), two transmembrane proteins (SsuC) and a solute-binding protein (SsuA).

It is found in the cell inner membrane. It catalyses the reaction ATP + H2O + aliphatic sulfonate-[sulfonate-binding protein]Side 1 = ADP + phosphate + aliphatic sulfonateSide 2 + [sulfonate-binding protein]Side 1.. In terms of biological role, part of the ABC transporter complex SsuABC involved in aliphatic sulfonates import. Responsible for energy coupling to the transport system. This chain is Aliphatic sulfonates import ATP-binding protein SsuB, found in Pseudomonas fluorescens (strain Pf0-1).